A 104-amino-acid polypeptide reads, in one-letter code: PE-PGRS family protein PE_PGRS60 (104 aa).

Residues 1-60 form the PE domain; sequence MSYVIAAPEALVAAATDLATLGSTIGAANAAAAGSTTALLTAGADEVSAAIAAYSECTAR. The segment at 64 to 104 is disordered; that stretch reads HSVRGRRRSMSGSCRPWPQVGAPMRPPRPPASRRCRARSIC. The segment covering 94 to 104 has biased composition (basic residues); that stretch reads ASRRCRARSIC.

It belongs to the mycobacterial PE family. PGRS subfamily.

Functionally, binds fibronectin. May contribute to pathogenicity. The chain is PE-PGRS family protein PE_PGRS60 from Mycobacterium tuberculosis (strain ATCC 25618 / H37Rv).